The chain runs to 174 residues: Cytochrome c oxidase subunit 5A, mitochondrial (174 aa).

The N-terminal 29 residues, 1 to 29 (MASLTRAVTRLAIAGRQAVRTIATTTPVS), are a transit peptide targeting the mitochondrion.

It belongs to the cytochrome c oxidase subunit 5A family. In terms of assembly, component of the cytochrome c oxidase (complex IV, CIV), a multisubunit enzyme composed of a catalytic core of 3 subunits and several supernumerary subunits. The complex exists as a monomer or a dimer and forms supercomplexes (SCs) in the inner mitochondrial membrane with ubiquinol-cytochrome c oxidoreductase (cytochrome b-c1 complex, complex III, CIII).

It is found in the mitochondrion inner membrane. It participates in energy metabolism; oxidative phosphorylation. Functionally, component of the cytochrome c oxidase, the last enzyme in the mitochondrial electron transport chain which drives oxidative phosphorylation. The respiratory chain contains 3 multisubunit complexes succinate dehydrogenase (complex II, CII), ubiquinol-cytochrome c oxidoreductase (cytochrome b-c1 complex, complex III, CIII) and cytochrome c oxidase (complex IV, CIV), that cooperate to transfer electrons derived from NADH and succinate to molecular oxygen, creating an electrochemical gradient over the inner membrane that drives transmembrane transport and the ATP synthase. Cytochrome c oxidase is the component of the respiratory chain that catalyzes the reduction of oxygen to water. Electrons originating from reduced cytochrome c in the intermembrane space (IMS) are transferred via the dinuclear copper A center (CU(A)) of subunit 2 and heme A of subunit 1 to the active site in subunit 1, a binuclear center (BNC) formed by heme A3 and copper B (CU(B)). The BNC reduces molecular oxygen to 2 water molecules using 4 electrons from cytochrome c in the IMS and 4 protons from the mitochondrial matrix. The sequence is that of Cytochrome c oxidase subunit 5A, mitochondrial from Caenorhabditis elegans.